The sequence spans 334 residues: UDP-N-acetylglucosamine 4,6-dehydratase (inverting) (334 aa).

NADP(+) contacts are provided by residues 13–16, 37–42, 61–62, A81, K85, and 123–124; these read TGSF, SRDELK, DV, and LS. K85 is a binding site for substrate. The active site involves K127. 2 residues coordinate NADP(+): Y135 and K139. Residue N167 participates in substrate binding. 168–172 lines the NADP(+) pocket; sequence VVGSR. Substrate contacts are provided by V175, T193, R252, and E255.

The protein belongs to the polysaccharide synthase family. Homohexamer. NADP(+) is required as a cofactor.

It carries out the reaction UDP-N-acetyl-alpha-D-glucosamine = UDP-2-acetamido-2,6-dideoxy-beta-L-arabino-hex-4-ulose + H2O. Functionally, catalyzes the first step in the biosynthesis of pseudaminic acid, a sialic-acid-like sugar that is used to modify flagellin. Has both C6 dehydratase and C5 epimerase activities that result in the production of both UDP-2-acetamido-2,6-dideoxy-beta-L-arabino-4-hexulose and UDP-2-acetamido-2,6-dideoxy-alpha-D-xylo-4-hexulose. The chain is UDP-N-acetylglucosamine 4,6-dehydratase (inverting) (pseB) from Campylobacter jejuni subsp. jejuni serotype O:2 (strain ATCC 700819 / NCTC 11168).